The primary structure comprises 84 residues: Transmembrane protein EP84R (84 aa).

2 consecutive transmembrane segments (helical) span residues 31–51 (VIGVILLVISLLFIFIGIIIL) and 60–80 (AASIFIVLSLILGGGGFFLIY).

It belongs to the asfivirus EP84R family.

It is found in the virion membrane. This chain is Transmembrane protein EP84R, found in Ornithodoros (relapsing fever ticks).